We begin with the raw amino-acid sequence, 89 residues long: Acylphosphatase (89 aa).

The Acylphosphatase-like domain occupies 3-89 (ALEIYVSGNV…ENYESFEVAY (87 aa)). Residues arginine 18 and asparagine 36 contribute to the active site.

The protein belongs to the acylphosphatase family.

The enzyme catalyses an acyl phosphate + H2O = a carboxylate + phosphate + H(+). The polypeptide is Acylphosphatase (acyP) (Archaeoglobus fulgidus (strain ATCC 49558 / DSM 4304 / JCM 9628 / NBRC 100126 / VC-16)).